We begin with the raw amino-acid sequence, 41 residues long: uncharacterized protein (41 aa).

This is an uncharacterized protein from Saccharomyces cerevisiae (strain ATCC 204508 / S288c) (Baker's yeast).